Here is a 400-residue protein sequence, read N- to C-terminus: MTQFASPVLHSLLDTDAYKLHMQQAVFHHYYDVHVAAEFRCRGDDLLGIYADAIREQVQAMQHLRLQDDEYQWLSALPFFKADYLNWLREFRFNPEQVTVSNDNGKLDIRLSGPWREVILWEVPLLAVISEMVHRYRSPQADVAQALDTLENKLVDFSALTAGLDMSRFHLMDFGTRRRFSREVQETIVKRLQQESWFVGTSNYDLARRLSLTPMGTQAHEWFQAHQQISPDLANSQRAALAAWLEEYPDQLGIALTDCITMDAFLRDFGVEFASRYQGLRHDSGDPVEWGEKAIAHYEKLGIDPQSKTLVFSDNLDLRKAVELYRHFSSRVQLSFGIGTRLTCDIPQVKPLNIVIKLVECNGKPVAKLSDSPGKTICHDKAFVRALRKAFDLPHIKKAS.

The residue at position 220 (H220) is a Phosphohistidine; by autocatalysis.

Belongs to the NAPRTase family. In terms of processing, transiently phosphorylated on a His residue during the reaction cycle. Phosphorylation strongly increases the affinity for substrates and increases the rate of nicotinate D-ribonucleotide production. Dephosphorylation regenerates the low-affinity form of the enzyme, leading to product release.

It catalyses the reaction nicotinate + 5-phospho-alpha-D-ribose 1-diphosphate + ATP + H2O = nicotinate beta-D-ribonucleotide + ADP + phosphate + diphosphate. It functions in the pathway cofactor biosynthesis; NAD(+) biosynthesis; nicotinate D-ribonucleotide from nicotinate: step 1/1. In terms of biological role, catalyzes the synthesis of beta-nicotinate D-ribonucleotide from nicotinate and 5-phospho-D-ribose 1-phosphate at the expense of ATP. The sequence is that of Nicotinate phosphoribosyltransferase from Escherichia coli O45:K1 (strain S88 / ExPEC).